The chain runs to 101 residues: Small ribosomal subunit protein uS14 (101 aa).

The protein belongs to the universal ribosomal protein uS14 family. In terms of assembly, part of the 30S ribosomal subunit. Contacts proteins S3 and S10.

Functionally, binds 16S rRNA, required for the assembly of 30S particles and may also be responsible for determining the conformation of the 16S rRNA at the A site. This Polaromonas naphthalenivorans (strain CJ2) protein is Small ribosomal subunit protein uS14.